A 113-amino-acid chain; its full sequence is N(2)-fixation sustaining protein CowN (113 aa).

It belongs to the CowN family.

Is required to sustain N(2)-dependent growth in the presence of low levels of carbon monoxide (CO). Probably acts by protecting the N(2) fixation ability of the nitrogenase complex, which is inactivated in the presence of CO. In Wolinella succinogenes (strain ATCC 29543 / DSM 1740 / CCUG 13145 / JCM 31913 / LMG 7466 / NCTC 11488 / FDC 602W) (Vibrio succinogenes), this protein is N(2)-fixation sustaining protein CowN.